The following is a 290-amino-acid chain: Fructose-1,6-bisphosphatase class 1 (290 aa).

Residues Glu-78, Asp-96, Leu-98, and Asp-99 each coordinate Mg(2+). Residues 99-102 (DGSS), Tyr-201, and Lys-226 each bind substrate. Glu-232 lines the Mg(2+) pocket.

It belongs to the FBPase class 1 family. Homotetramer. The cofactor is Mg(2+).

The protein localises to the cytoplasm. It carries out the reaction beta-D-fructose 1,6-bisphosphate + H2O = beta-D-fructose 6-phosphate + phosphate. It participates in carbohydrate biosynthesis; gluconeogenesis. This Helicobacter acinonychis (strain Sheeba) protein is Fructose-1,6-bisphosphatase class 1.